Consider the following 360-residue polypeptide: DNA ADP-ribosyl glycohydrolase (360 aa).

The Macro domain maps to 1–155 (MLRFVRGNLL…VYEPVENPKA (155 aa)). ADP-D-ribose-binding positions include 8-9 (NL), 20-22 (TVN), 31-34 (VALQ), and Thr79. The Nucleophile role is filled by Lys80. 117-121 (GAGNG) is an ADP-D-ribose binding site. Residues 167 to 338 (LTPARAALLK…VALDALLKRG (172 aa)) are interaction with DarT.

Belongs to the DarG ADP-ribosyl glycohydrolase family. In terms of assembly, interacts (via C-terminus) with cognate toxin DarT; this heterodimeric complex neutralizes the toxic effect of DarT by preventing ssDNA binding to DarT and consequently inactivating the toxin by direct protein-protein interactions.

The enzyme catalyses an N-(ADP-alpha-D-ribosyl)-thymidine in DNA + H2O = a thymidine in DNA + ADP-D-ribose. In terms of biological role, antitoxin component of the hybrid type II/IV toxin-antitoxin (TA) system DarTG, which plays a crucial role in controlling bacterial growth and bacteriophage infection. De-ADP-ribosylates DNA modified on thymidine by its cognate toxin DarT, which neutralizes the activity of cognate toxin DarT. Upon expression in E.coli neutralizes the effect of cognate toxin DarT. Upon expression in M.tuberculosis neutralizes the toxic effects of endogenous DarT. In Thermus aquaticus (strain ATCC BAA-2747 / Y51MC23), this protein is DNA ADP-ribosyl glycohydrolase.